A 188-amino-acid polypeptide reads, in one-letter code: Acyl-acyl carrier protein thioesterase ATL2, chloroplastic (188 aa).

A chloroplast-targeting transit peptide spans 1-47 (MFQATSTGAQIMHAAFPRSWRRGHVLPLRSAKIFKPLACLELRGSTG). The active site involves Asp-64.

The protein belongs to the 4-hydroxybenzoyl-CoA thioesterase family. In terms of tissue distribution, expressed in endodermal and peridermal cells in young and mature roots, in boundaries of stem lateral organs and developing seeds.

It localises to the plastid. The protein localises to the chloroplast. In terms of biological role, acyl-ACP thioesterase involved in the production of fatty acids and beta-keto fatty acids. Can produce beta-keto fatty acids of medium chain (8:0 and 10:0) and small amounts of 8:0 fatty acid when expressed in a heterologous organism (E.coli). May play a role in suberin biosynthesis. This chain is Acyl-acyl carrier protein thioesterase ATL2, chloroplastic, found in Arabidopsis thaliana (Mouse-ear cress).